The chain runs to 141 residues: 3-hydroxyacyl-[acyl-carrier-protein] dehydratase FabZ (141 aa).

H48 is a catalytic residue.

Belongs to the thioester dehydratase family. FabZ subfamily.

The protein localises to the cytoplasm. The enzyme catalyses a (3R)-hydroxyacyl-[ACP] = a (2E)-enoyl-[ACP] + H2O. Its function is as follows. Involved in unsaturated fatty acids biosynthesis. Catalyzes the dehydration of short chain beta-hydroxyacyl-ACPs and long chain saturated and unsaturated beta-hydroxyacyl-ACPs. In Bacillus velezensis (strain DSM 23117 / BGSC 10A6 / LMG 26770 / FZB42) (Bacillus amyloliquefaciens subsp. plantarum), this protein is 3-hydroxyacyl-[acyl-carrier-protein] dehydratase FabZ.